The chain runs to 346 residues: Protein farnesyltransferase/geranylgeranyltransferase type-1 subunit alpha (346 aa).

PFTA repeat units lie at residues 59-93 (RSTR…ALGV), 94-128 (DLRE…KLGA), 130-164 (AVTN…ALGG), 165-198 (WEDE…RSPL), and 205-239 (MREL…NDTQ).

This sequence belongs to the protein prenyltransferase subunit alpha family. Heterodimer of an alpha and a beta subunit. The cofactor is Mg(2+).

The enzyme catalyses L-cysteinyl-[protein] + (2E,6E)-farnesyl diphosphate = S-(2E,6E)-farnesyl-L-cysteinyl-[protein] + diphosphate. It carries out the reaction geranylgeranyl diphosphate + L-cysteinyl-[protein] = S-geranylgeranyl-L-cysteinyl-[protein] + diphosphate. In terms of biological role, essential subunit of both the farnesyltransferase and the geranylgeranyltransferase complex. Contributes to the transfer of a farnesyl or geranylgeranyl moiety from farnesyl or geranylgeranyl diphosphate to a cysteine at the fourth position from the C-terminus of several proteins having the C-terminal sequence Cys-aliphatic-aliphatic-X. The chain is Protein farnesyltransferase/geranylgeranyltransferase type-1 subunit alpha (FTA) from Solanum lycopersicum (Tomato).